Consider the following 516-residue polypeptide: GMP synthase [glutamine-hydrolyzing] (516 aa).

Positions Lys-6–Gly-199 constitute a Glutamine amidotransferase type-1 domain. Residue Cys-83 is the Nucleophile of the active site. Active-site residues include His-173 and Glu-175. Residues Trp-200–Arg-391 form the GMPS ATP-PPase domain. Ser-227–Thr-233 contributes to the ATP binding site.

As to quaternary structure, homodimer.

It catalyses the reaction XMP + L-glutamine + ATP + H2O = GMP + L-glutamate + AMP + diphosphate + 2 H(+). It functions in the pathway purine metabolism; GMP biosynthesis; GMP from XMP (L-Gln route): step 1/1. In terms of biological role, catalyzes the synthesis of GMP from XMP. This chain is GMP synthase [glutamine-hydrolyzing], found in Solidesulfovibrio magneticus (strain ATCC 700980 / DSM 13731 / RS-1) (Desulfovibrio magneticus).